A 315-amino-acid polypeptide reads, in one-letter code: Glutaminase (315 aa).

7 residues coordinate substrate: Ser-70, Asn-120, Glu-166, Asn-173, Tyr-197, Tyr-249, and Val-267.

Belongs to the glutaminase family. As to quaternary structure, homotetramer.

It carries out the reaction L-glutamine + H2O = L-glutamate + NH4(+). This Sinorhizobium fredii (strain NBRC 101917 / NGR234) protein is Glutaminase.